The primary structure comprises 226 residues: RLA class II histocompatibility antigen, DP alpha-1 chain (226 aa).

The Extracellular segment spans residues 1 to 189; the sequence is EHVSVFVIFA…PIQMPETTET (189 aa). 2 N-linked (GlcNAc...) asparagine glycosylation sites follow: asparagine 75 and asparagine 115. One can recognise an Ig-like C1-type domain in the interval 84–176; the sequence is PEVIVFPKEP…LDAPLLTHWE (93 aa). Cysteine 104 and cysteine 160 form a disulfide bridge. The helical transmembrane segment at 190-210 threads the bilayer; it reads VVCALGLVVGLAGVVVGIVLI. Residues 211 to 226 lie on the Cytoplasmic side of the membrane; that stretch reads TKALRSSPDPRARRPL.

It belongs to the MHC class II family.

Its subcellular location is the membrane. The polypeptide is RLA class II histocompatibility antigen, DP alpha-1 chain (Oryctolagus cuniculus (Rabbit)).